We begin with the raw amino-acid sequence, 395 residues long: Flagellin B (395 aa).

This sequence belongs to the bacterial flagellin family.

It localises to the secreted. The protein localises to the bacterial flagellum. Functionally, flagellin is the subunit protein which polymerizes to form the filaments of bacterial flagella. This Rhizobium meliloti (Ensifer meliloti) protein is Flagellin B (flaB).